The chain runs to 429 residues: Adenylosuccinate synthetase (429 aa).

Residues 12–18 and 40–42 each bind GTP; these read GDEGKGK and GHT. The active-site Proton acceptor is the Asp-13. Mg(2+) contacts are provided by Asp-13 and Gly-40. IMP-binding positions include 13 to 16, 38 to 41, Thr-129, Arg-143, Gln-224, Thr-239, and Arg-303; these read DEGK and NAGH. The Proton donor role is filled by His-41. 299-305 contacts substrate; sequence ATTGRRR. Residues Arg-305, 331–333, and 413–415 each bind GTP; these read KLD and SVG.

Belongs to the adenylosuccinate synthetase family. In terms of assembly, homodimer. The cofactor is Mg(2+).

The protein resides in the cytoplasm. It catalyses the reaction IMP + L-aspartate + GTP = N(6)-(1,2-dicarboxyethyl)-AMP + GDP + phosphate + 2 H(+). The protein operates within purine metabolism; AMP biosynthesis via de novo pathway; AMP from IMP: step 1/2. In terms of biological role, plays an important role in the de novo pathway of purine nucleotide biosynthesis. Catalyzes the first committed step in the biosynthesis of AMP from IMP. The polypeptide is Adenylosuccinate synthetase (Desulforapulum autotrophicum (strain ATCC 43914 / DSM 3382 / VKM B-1955 / HRM2) (Desulfobacterium autotrophicum)).